The primary structure comprises 281 residues: Cytosolic Fe-S cluster assembly factor CFD1 (281 aa).

24 to 31 is an ATP binding site; sequence GKGGVGKS. Positions 201 and 204 each coordinate [4Fe-4S] cluster.

The protein belongs to the Mrp/NBP35 ATP-binding proteins family. NUBP2/CFD1 subfamily. As to quaternary structure, heterotetramer of 2 NBP35 and 2 CFD1 chains. [4Fe-4S] cluster serves as cofactor.

It localises to the cytoplasm. In terms of biological role, component of the cytosolic iron-sulfur (Fe/S) protein assembly (CIA) machinery. Required for maturation of extramitochondrial Fe-S proteins. The NBP35-CFD1 heterotetramer forms a Fe-S scaffold complex, mediating the de novo assembly of an Fe-S cluster and its transfer to target apoproteins. Required for biogenesis and export of both ribosomal subunits, which may reflect a role in assembly of the Fe/S clusters in RLI1, a protein which performs rRNA processing and ribosome export. This Eremothecium gossypii (strain ATCC 10895 / CBS 109.51 / FGSC 9923 / NRRL Y-1056) (Yeast) protein is Cytosolic Fe-S cluster assembly factor CFD1.